Reading from the N-terminus, the 92-residue chain is C-C motif chemokine 3 (92 aa).

Positions 1 to 19 (MKVPGAALAVLLCTMSLCS) are cleaved as a signal peptide. 2 disulfides stabilise this stretch: Cys33–Cys57 and Cys34–Cys73.

It belongs to the intercrine beta (chemokine CC) family. In terms of assembly, self-associates. Also heterodimer of MIP-1-alpha(4-69) and MIP-1-beta(3-69). Interacts with CCR1.

It is found in the secreted. Monokine with inflammatory and chemokinetic properties. Binds to CCR1, CCR4 and CCR5. One of the major HIV-suppressive factors produced by CD8+ T-cells. Recombinant MIP-1-alpha induces a dose-dependent inhibition of different strains of HIV-1, HIV-2, and simian immunodeficiency virus (SIV). This Canis lupus familiaris (Dog) protein is C-C motif chemokine 3 (CCL3).